We begin with the raw amino-acid sequence, 113 residues long: TYRO protein tyrosine kinase-binding protein (113 aa).

The N-terminal stretch at 1 to 21 (MGGLEPCSRLLLLPLLLAVSG) is a signal peptide. Residues 22–40 (LRPVQAQAQSDCSCSTVSP) lie on the Extracellular side of the membrane. The helical transmembrane segment at 41-61 (GVLAGIVMGDLVLTVLIALAV) threads the bilayer. Aspartate 50 serves as a coordination point for Ca(2+). The Cytoplasmic portion of the chain corresponds to 62–113 (YFLGRLVPRGRGAAEAATRKQRITETESPYQELQGQRSDVYSDLNTQRPYYK). A disordered region spans residues 75 to 113 (AEAATRKQRITETESPYQELQGQRSDVYSDLNTQRPYYK). Residues 80–108 (RKQRITETESPYQELQGQRSDVYSDLNTQ) enclose the ITAM domain. Polar residues predominate over residues 87 to 113 (TESPYQELQGQRSDVYSDLNTQRPYYK). Residues tyrosine 91 and tyrosine 102 each carry the phosphotyrosine modification.

It belongs to the TYROBP family. Homodimer; disulfide-linked. Homotrimer; disulfide-linked. Homotetramer; disulfide-linked. Homotrimers and homotetramers form when low levels of partner receptors are available and are competitive with assembly with interacting receptors. They may represent alternative oligomerization states or may be intermediates in the receptor assembly process. Binding of a metal cation aids in homooligomerization through coordination of the metal ion by the subunits of the oligomer. Interacts with TREM1. Interacts with TREM2. Interacts with SIRPB1. Interacts with CLECSF5. Interacts with SIGLEC14. Interacts with CD300LB and CD300E. Interacts with CD300C2. Interacts (via ITAM domain) with SYK (via SH2 domains); activates SYK mediating neutrophil and macrophage integrin-mediated activation. Interacts with KLRC2, KIR2DS3 and KIR2DS5. Interacts with CD300H. Interacts with KIR2DS1. Interacts with KLRD1. Interacts with SIGLEC1. Post-translationally, following ligand binding by associated receptors, tyrosine phosphorylated in the ITAM domain which leads to activation of additional tyrosine kinases and subsequent cell activation. As to expression, expressed at low levels in the early development of the hematopoietic system and in the promonocytic stage and at high levels in mature monocytes. Expressed in hematological cells and tissues such as peripheral blood leukocytes and spleen. Also found in bone marrow, lymph nodes, placenta, lung and liver. Expressed at lower levels in different parts of the brain especially in the basal ganglia and corpus callosum.

The protein resides in the cell membrane. Functionally, adapter protein which non-covalently associates with activating receptors found on the surface of a variety of immune cells to mediate signaling and cell activation following ligand binding by the receptors. TYROBP is tyrosine-phosphorylated in the ITAM domain following ligand binding by the associated receptors which leads to activation of additional tyrosine kinases and subsequent cell activation. Also has an inhibitory role in some cells. Non-covalently associates with activating receptors of the CD300 family to mediate cell activation. Also mediates cell activation through association with activating receptors of the CD200R family. Required for neutrophil activation mediated by integrin. Required for the activation of myeloid cells mediated by the CLEC5A/MDL1 receptor. Associates with natural killer (NK) cell receptors such as KIR2DS2 and the KLRD1/KLRC2 heterodimer to mediate NK cell activation. Also enhances trafficking and cell surface expression of NK cell receptors KIR2DS1, KIR2DS2 and KIR2DS4 and ensures their stability at the cell surface. Associates with SIRPB1 to mediate activation of myeloid cells such as monocytes and dendritic cells. Associates with TREM1 to mediate activation of neutrophils and monocytes. Associates with TREM2 on monocyte-derived dendritic cells to mediate up-regulation of chemokine receptor CCR7 and dendritic cell maturation and survival. Association with TREM2 mediates cytokine-induced formation of multinucleated giant cells which are formed by the fusion of macrophages. Stabilizes the TREM2 C-terminal fragment (TREM2-CTF) produced by TREM2 ectodomain shedding which suppresses the release of pro-inflammatory cytokines. In microglia, required with TREM2 for phagocytosis of apoptotic neurons. Required with ITGAM/CD11B in microglia to control production of microglial superoxide ions which promote the neuronal apoptosis that occurs during brain development. Promotes pro-inflammatory responses in microglia following nerve injury which accelerates degeneration of injured neurons. Positively regulates the expression of the IRAK3/IRAK-M kinase and IL10 production by liver dendritic cells and inhibits their T cell allostimulatory ability. Negatively regulates B cell proliferation. Required for CSF1-mediated osteoclast cytoskeletal organization. Positively regulates multinucleation during osteoclast development. In Homo sapiens (Human), this protein is TYRO protein tyrosine kinase-binding protein.